The chain runs to 195 residues: UDP-N-acetylbacillosamine N-acetyltransferase (195 aa).

Residues 13 to 15 (SGH), 35 to 36 (DD), and glycine 56 each bind substrate. Histidine 125 serves as the catalytic Proton acceptor. Acetyl-CoA contacts are provided by histidine 134, isoleucine 155, and glycine 173.

The protein belongs to the transferase hexapeptide repeat family. As to quaternary structure, homotrimer.

The catalysed reaction is UDP-N-acetylbacillosamine + acetyl-CoA = UDP-N,N'-diacetylbacillosamine + CoA + H(+). It participates in protein modification; protein glycosylation. Functionally, acetyltransferase that modifies the UDP-4-amino-sugar to form UDP-N,N'-diacetylbacillosamine in the N-linked protein glycosylation pathway. In Campylobacter jejuni subsp. jejuni serotype O:2 (strain ATCC 700819 / NCTC 11168), this protein is UDP-N-acetylbacillosamine N-acetyltransferase (pglD).